The primary structure comprises 219 residues: Histone H1.11R (219 aa).

Low complexity-rich tracts occupy residues 1 to 20 (MAET…AAKA) and 28 to 40 (AAGG…PAGP). Disordered regions lie at residues 1–42 (MAET…GPSV) and 89–219 (LVSK…AKKK). The H15 domain occupies 38-111 (AGPSVTELIT…GASGSFRLSK (74 aa)). Basic residues-rich tracts occupy residues 121–135 (PKKK…KAAA), 143–160 (KKPK…KAKK), 168–183 (KSVK…KKAV), and 192–219 (KAVK…AKKK).

This sequence belongs to the histone H1/H5 family.

Its subcellular location is the nucleus. It localises to the chromosome. Its function is as follows. Histones H1 are necessary for the condensation of nucleosome chains into higher-order structures. The polypeptide is Histone H1.11R (Gallus gallus (Chicken)).